The primary structure comprises 155 residues: MYKMQLLSCIALTLVLVANSAPITSSSTKETEQQMEQLLLDLQLLLNGVNNYENPQLSRMLTFKFYTPKKATEFTHLQCLAEELKNLEEVLGLPQSKNVHLTDTKELISNMNVTLLKLKGSETSYNCEYDDETATITEFLNKWITFCQSIFSTLT.

An N-terminal signal peptide occupies residues 1-20 (MYKMQLLSCIALTLVLVANS). O-linked (GalNAc...) threonine glycosylation is present at Thr24. A disulfide bridge links Cys79 with Cys127. N-linked (GlcNAc...) asparagine glycosylation is present at Asn112.

The protein belongs to the IL-2 family.

The protein resides in the secreted. Its function is as follows. Cytokine produced by activated CD4-positive helper T-cells and to a lesser extend activated CD8-positive T-cells and natural killer (NK) cells that plays pivotal roles in the immune response and tolerance. Binds to a receptor complex composed of either the high-affinity trimeric IL-2R (IL2RA/CD25, IL2RB/CD122 and IL2RG/CD132) or the low-affinity dimeric IL-2R (IL2RB and IL2RG). Interaction with the receptor leads to oligomerization and conformation changes in the IL-2R subunits resulting in downstream signaling starting with phosphorylation of JAK1 and JAK3. In turn, JAK1 and JAK3 phosphorylate the receptor to form a docking site leading to the phosphorylation of several substrates including STAT5. This process leads to activation of several pathways including STAT, phosphoinositide-3-kinase/PI3K and mitogen-activated protein kinase/MAPK pathways. Functions as a T-cell growth factor and can increase NK-cell cytolytic activity as well. Promotes strong proliferation of activated B-cells and subsequently immunoglobulin production. Plays a pivotal role in regulating the adaptive immune system by controlling the survival and proliferation of regulatory T-cells, which are required for the maintenance of immune tolerance. Moreover, participates in the differentiation and homeostasis of effector T-cell subsets, including Th1, Th2, Th17 as well as memory CD8-positive T-cells. The protein is Interleukin-2 (IL2) of Canis lupus familiaris (Dog).